A 290-amino-acid chain; its full sequence is Translin-associated protein X (290 aa).

The segment at 1–34 is disordered; it reads MNGKEGPGGFRKRKHDNFPHNQRREGKDASSSSP. Residues 16–28 show a composition bias toward basic and acidic residues; that stretch reads DNFPHNQRREGKD. An interaction with C1D region spans residues 73 to 208; the sequence is LLHRITSAPD…MRMCINSVGN (136 aa). Glu129 and Glu197 together coordinate Mg(2+). Residue Lys279 forms a Glycyl lysine isopeptide (Lys-Gly) (interchain with G-Cter in SUMO2) linkage.

The protein belongs to the translin family. In terms of assembly, ring-shaped heterooctamer of six TSN and two TSNAX subunits. Interacts with GOLGA3, TSNAXIP1, SUN1 and AKAP9. Interacts with the homodimeric form of C1D following gamma-radiation. Interacts with TSN and C1D in a mutually exclusive manner. In terms of processing, sumoylated with SUMO1. Detected in cerebellum.

It localises to the cytoplasm. It is found in the perinuclear region. The protein resides in the golgi apparatus. Its subcellular location is the nucleus. Acts in combination with TSN as an endonuclease involved in the activation of the RNA-induced silencing complex (RISC). Possible role in spermatogenesis. In Rattus norvegicus (Rat), this protein is Translin-associated protein X (Tsnax).